A 428-amino-acid polypeptide reads, in one-letter code: Tyrosine--tRNA ligase (428 aa).

Position 34 (tyrosine 34) interacts with L-tyrosine. The 'HIGH' region motif lies at 39–48 (PTADSLHIGH). Positions 171 and 175 each coordinate L-tyrosine. Positions 236 to 240 (KFGKT) match the 'KMSKS' region motif. Lysine 239 is an ATP binding site. In terms of domain architecture, S4 RNA-binding spans 358 to 424 (VGLIDLLVDA…GKKKYFLIQV (67 aa)).

Belongs to the class-I aminoacyl-tRNA synthetase family. TyrS type 1 subfamily. In terms of assembly, homodimer.

Its subcellular location is the cytoplasm. The catalysed reaction is tRNA(Tyr) + L-tyrosine + ATP = L-tyrosyl-tRNA(Tyr) + AMP + diphosphate + H(+). Functionally, catalyzes the attachment of tyrosine to tRNA(Tyr) in a two-step reaction: tyrosine is first activated by ATP to form Tyr-AMP and then transferred to the acceptor end of tRNA(Tyr). The protein is Tyrosine--tRNA ligase of Oceanobacillus iheyensis (strain DSM 14371 / CIP 107618 / JCM 11309 / KCTC 3954 / HTE831).